A 264-amino-acid polypeptide reads, in one-letter code: MKSVLGFKKAKVTEKISMVTCYDYTLAKIINSTDIDCILVGDSGGMVLLGKKNTTYTTLDDMQFMTQAVANGATDKFIVADLPFMSYRQSLETTMQAVMALIQSGAHAIKLEGSSGNLDIIKHIVDSGVPVMGHIGMTPQFINSFGGFKVQGRTEEAAKHLLEEAKLLEQAGCFGIVLECIPANIAKDITQNLDIPTIGIGAGSNTDGQILVLQDMLGMNTDFQPKFVKKYIDGSKLFSDAINTYVKETKANTFPTKEHCYDYC.

Mg(2+) contacts are provided by aspartate 42 and aspartate 81. 3-methyl-2-oxobutanoate is bound by residues 42–43 (DS), aspartate 81, and lysine 110. Glutamate 112 contributes to the Mg(2+) binding site. Glutamate 179 acts as the Proton acceptor in catalysis.

The protein belongs to the PanB family. Homodecamer; pentamer of dimers. The cofactor is Mg(2+).

Its subcellular location is the cytoplasm. The catalysed reaction is 3-methyl-2-oxobutanoate + (6R)-5,10-methylene-5,6,7,8-tetrahydrofolate + H2O = 2-dehydropantoate + (6S)-5,6,7,8-tetrahydrofolate. It participates in cofactor biosynthesis; (R)-pantothenate biosynthesis; (R)-pantoate from 3-methyl-2-oxobutanoate: step 1/2. Functionally, catalyzes the reversible reaction in which hydroxymethyl group from 5,10-methylenetetrahydrofolate is transferred onto alpha-ketoisovalerate to form ketopantoate. In Francisella tularensis subsp. tularensis (strain FSC 198), this protein is 3-methyl-2-oxobutanoate hydroxymethyltransferase.